Consider the following 805-residue polypeptide: Leucine--tRNA ligase (805 aa).

The 'HIGH' region motif lies at 40 to 51 (PYPSGSGLHVGH). The short motif at 576 to 580 (KMSKS) is the 'KMSKS' region element. Lysine 579 contacts ATP.

This sequence belongs to the class-I aminoacyl-tRNA synthetase family.

It is found in the cytoplasm. The catalysed reaction is tRNA(Leu) + L-leucine + ATP = L-leucyl-tRNA(Leu) + AMP + diphosphate. This is Leucine--tRNA ligase from Chloroherpeton thalassium (strain ATCC 35110 / GB-78).